We begin with the raw amino-acid sequence, 511 residues long: Cytochrome P450 76C4 (511 aa).

A helical transmembrane segment spans residues 3–23 (IISGQALFLLFCFISSCFLIS). Cys450 is a binding site for heme.

The protein belongs to the cytochrome P450 family. The cofactor is heme.

Its subcellular location is the membrane. The sequence is that of Cytochrome P450 76C4 (CYP76C4) from Arabidopsis thaliana (Mouse-ear cress).